We begin with the raw amino-acid sequence, 398 residues long: Glucose-1-phosphate adenylyltransferase (398 aa).

Residues Tyr-100, Gly-165, 180-181 (EK), and Ser-191 each bind alpha-D-glucose 1-phosphate.

This sequence belongs to the bacterial/plant glucose-1-phosphate adenylyltransferase family. As to quaternary structure, homotetramer.

It carries out the reaction alpha-D-glucose 1-phosphate + ATP + H(+) = ADP-alpha-D-glucose + diphosphate. The protein operates within glycan biosynthesis; glycogen biosynthesis. Functionally, involved in the biosynthesis of ADP-glucose, a building block required for the elongation reactions to produce glycogen. Catalyzes the reaction between ATP and alpha-D-glucose 1-phosphate (G1P) to produce pyrophosphate and ADP-Glc. This is Glucose-1-phosphate adenylyltransferase from Desulfitobacterium hafniense (strain Y51).